The sequence spans 396 residues: Capsular polysaccharide biosynthesis protein CapF (396 aa).

The next 12 helical transmembrane spans lie at 7–27 (YMFV…LVIV), 41–61 (ALVI…SVIV), 74–94 (AILS…YVLG), 101–121 (ILIV…YGIY), 129–149 (LLGI…YIIY), 153–173 (HNLN…FAII), 198–218 (IFIL…NTGI), 232–252 (LGIF…ANSI), 279–299 (MVFI…FLGE), 315–335 (IILI…FLGT), 351–371 (LILL…YSLL), and 372–392 (GAAL…YYFY).

This sequence belongs to the polysaccharide synthase family.

Its subcellular location is the cell membrane. It functions in the pathway capsule biogenesis; capsule polysaccharide biosynthesis. Its function is as follows. Required for the biosynthesis of type 1 capsular polysaccharide. The protein is Capsular polysaccharide biosynthesis protein CapF (capF) of Staphylococcus aureus.